The sequence spans 72 residues: Phycobilisome 37.5 kDa linker polypeptide, phycocyanin-associated, rod (72 aa).

The PBS-linker domain occupies 1–72 (MTSSAAAIRL…ASGNISVREF (72 aa)).

Belongs to the phycobilisome linker protein family.

The protein localises to the cellular thylakoid membrane. Rod linker protein, associated with phycocyanin. Linker polypeptides determine the state of aggregation and the location of the disk-shaped phycobiliprotein units within the phycobilisome and modulate their spectroscopic properties in order to mediate a directed and optimal energy transfer. The polypeptide is Phycobilisome 37.5 kDa linker polypeptide, phycocyanin-associated, rod (cpcH2) (Pseudanabaena tenuis (strain PCC 7409)).